The following is a 33-amino-acid chain: Potassium channel toxin alpha-KTx 10.4 (33 aa).

3 disulfides stabilise this stretch: Cys3–Cys22, Cys8–Cys27, and Cys12–Cys29.

The protein belongs to the short scorpion toxin superfamily. Potassium channel inhibitor family. Alpha-KTx 10 subfamily. In terms of tissue distribution, expressed by the venom gland.

Its subcellular location is the secreted. In terms of biological role, blocks human voltage-gated potassium channel Kv1.2/KCNA2 (IC(50)=3.6 nM) and Kv1.3/KCNA3 (IC(50)=72 nM). In Centruroides tecomanus (Scorpion), this protein is Potassium channel toxin alpha-KTx 10.4.